The following is a 181-amino-acid chain: ATP-dependent protease subunit HslV (181 aa).

Threonine 6 is an active-site residue. Positions 162, 165, and 168 each coordinate Na(+).

It belongs to the peptidase T1B family. HslV subfamily. A double ring-shaped homohexamer of HslV is capped on each side by a ring-shaped HslU homohexamer. The assembly of the HslU/HslV complex is dependent on binding of ATP.

The protein localises to the cytoplasm. It catalyses the reaction ATP-dependent cleavage of peptide bonds with broad specificity.. With respect to regulation, allosterically activated by HslU binding. In terms of biological role, protease subunit of a proteasome-like degradation complex believed to be a general protein degrading machinery. This chain is ATP-dependent protease subunit HslV, found in Nitratidesulfovibrio vulgaris (strain ATCC 29579 / DSM 644 / CCUG 34227 / NCIMB 8303 / VKM B-1760 / Hildenborough) (Desulfovibrio vulgaris).